Reading from the N-terminus, the 685-residue chain is Sodium/glucose cotransporter 4 (685 aa).

Residues 1-20 (MNTELVAMEPGVSRNGVRTE) form a disordered region. The Extracellular segment spans residues 1–32 (MNTELVAMEPGVSRNGVRTETTTNPSLGLHTY). Residues 33 to 53 (DIVVVVIYFVFVLAVGIWSSI) form a helical membrane-spanning segment. Residues 54–71 (RASRGTVGGYFLAGRSMT) lie on the Cytoplasmic side of the membrane. The helical transmembrane segment at 72–94 (WWPIGASLMSSNVGSGLFIGLAG) threads the bilayer. Topologically, residues 95-110 (TGAAGGLAVGGFEWNA) are extracellular. The helical transmembrane segment at 111 to 131 (TFLLLALGWIFVPVYIAAGVV) threads the bilayer. Residues 132–153 (TMPQYLKKRFGGQRIQVYMSVL) are Cytoplasmic-facing. Residues 154–174 (SLILYIFTKISTDIFSGALFI) traverse the membrane as a helical segment. Residues 175-186 (QMALGWNLYLST) lie on the Extracellular side of the membrane. The chain crosses the membrane as a helical span at residues 187-207 (VILLVVTAVYTIAGGLTAVIY). At 208–213 (TDALQT) the chain is on the cytoplasmic side. A helical transmembrane segment spans residues 214 to 234 (VIMVGGALVLMFLGFQEVGWY). Residues 235–271 (PGLQQLYRQAIPNTTVPNTTCHLPRPDAFHMLRDPVN) are Extracellular-facing. N-linked (GlcNAc...) asparagine glycosylation is present at N247. Residues 272 to 292 (GDIPWPGLIFGLTVLATWCWC) traverse the membrane as a helical segment. The Cytoplasmic segment spans residues 293 to 313 (TDQVIVQRSLAAKNLSHAKGG). A helical membrane pass occupies residues 314–334 (SVLGGYLKILPMFFIVMPGMI). Residues 335–379 (SRALYPDEVACVDPDICQRVCGARVGCSNIAYPKLVMALMPVGLR) are Extracellular-facing. A helical membrane pass occupies residues 380-402 (GLMIAVIMAALMSSLTSIFNSSS). At 403 to 423 (TLFAIDVWQRFRRQASEQELM) the chain is on the cytoplasmic side. The helical transmembrane segment at 424 to 444 (VVGRLFVVFLVVISILWIPII) threads the bilayer. Residues 445–455 (QSSNSGQLFDY) lie on the Extracellular side of the membrane. The chain crosses the membrane as a helical span at residues 456 to 476 (IQSITSYLAPPITALFLLAIF). The Cytoplasmic portion of the chain corresponds to 477 to 483 (CKRVNEP). The chain crosses the membrane as a helical span at residues 484–504 (GAFWGLMFGLVVGILRMILEF). Residues 505–526 (SYSAPACGEMDRRPAVLKDFHY) lie on the Extracellular side of the membrane. Residues 527–547 (LYFALLLCGLTAIIIVVISFF) form a helical membrane-spanning segment. Over 548–664 (TEPIPDDKLA…SIEEEPLWRR (117 aa)) the chain is Cytoplasmic. The interval 577-616 (VSVNNTEDDNSPGLAGRPVVEGPAGDEEEANTTQGPEQPG) is disordered. A helical transmembrane segment spans residues 665 to 685 (VCNINAIILLAINIFLWGYFA).

Belongs to the sodium:solute symporter (SSF) (TC 2.A.21) family.

The protein resides in the cell membrane. It carries out the reaction D-mannose(out) + n Na(+)(out) = D-mannose(in) + n Na(+)(in). Electrogenic Na(+)-coupled sugar symporter that may play a primary role in D-mannose and possibly D-fructose and D-glucose transport at the plasma membrane. Transporter activity is driven by a transmembrane Na(+) electrochemical gradient set by the Na(+)/K(+) pump. Exclusively recognizes sugar substrates having a pyranose ring with an axial hydroxyl group on carbon 2. This chain is Sodium/glucose cotransporter 4 (Slc5a9), found in Mus musculus (Mouse).